The following is a 238-amino-acid chain: Uridylate kinase (238 aa).

12–15 (KLSG) contributes to the ATP binding site. A UMP-binding site is contributed by G54. Residues G55 and R59 each coordinate ATP. Residues D74 and 135-142 (TGNPFFTT) contribute to the UMP site. ATP-binding residues include T162, Y168, and D171.

Belongs to the UMP kinase family. Homohexamer.

The protein resides in the cytoplasm. The catalysed reaction is UMP + ATP = UDP + ADP. Its pathway is pyrimidine metabolism; CTP biosynthesis via de novo pathway; UDP from UMP (UMPK route): step 1/1. With respect to regulation, inhibited by UTP. Its function is as follows. Catalyzes the reversible phosphorylation of UMP to UDP. The polypeptide is Uridylate kinase (Nitrosospira multiformis (strain ATCC 25196 / NCIMB 11849 / C 71)).